A 335-amino-acid chain; its full sequence is Holliday junction branch migration complex subunit RuvB (335 aa).

A large ATPase domain (RuvB-L) region spans residues 4 to 184; that stretch reads ADRLVSAEVL…FGIVQRLEFY (181 aa). ATP-binding positions include Ile-23, Arg-24, Gly-65, Lys-68, Thr-69, Thr-70, 131 to 133, Arg-174, Tyr-184, and Arg-221; that span reads EDY. Thr-69 provides a ligand contact to Mg(2+). Positions 185-255 are small ATPAse domain (RuvB-S); it reads NVDDLQSIVS…IATRALDMLS (71 aa). The tract at residues 258 to 335 is head domain (RuvB-H); it reads AAGFDYLDRK…RHFGMVRNQE (78 aa). DNA contacts are provided by Arg-294, Arg-313, and Arg-318.

It belongs to the RuvB family. In terms of assembly, homohexamer. Forms an RuvA(8)-RuvB(12)-Holliday junction (HJ) complex. HJ DNA is sandwiched between 2 RuvA tetramers; dsDNA enters through RuvA and exits via RuvB. An RuvB hexamer assembles on each DNA strand where it exits the tetramer. Each RuvB hexamer is contacted by two RuvA subunits (via domain III) on 2 adjacent RuvB subunits; this complex drives branch migration. In the full resolvosome a probable DNA-RuvA(4)-RuvB(12)-RuvC(2) complex forms which resolves the HJ.

The protein resides in the cytoplasm. It carries out the reaction ATP + H2O = ADP + phosphate + H(+). The RuvA-RuvB-RuvC complex processes Holliday junction (HJ) DNA during genetic recombination and DNA repair, while the RuvA-RuvB complex plays an important role in the rescue of blocked DNA replication forks via replication fork reversal (RFR). RuvA specifically binds to HJ cruciform DNA, conferring on it an open structure. The RuvB hexamer acts as an ATP-dependent pump, pulling dsDNA into and through the RuvAB complex. RuvB forms 2 homohexamers on either side of HJ DNA bound by 1 or 2 RuvA tetramers; 4 subunits per hexamer contact DNA at a time. Coordinated motions by a converter formed by DNA-disengaged RuvB subunits stimulates ATP hydrolysis and nucleotide exchange. Immobilization of the converter enables RuvB to convert the ATP-contained energy into a lever motion, pulling 2 nucleotides of DNA out of the RuvA tetramer per ATP hydrolyzed, thus driving DNA branch migration. The RuvB motors rotate together with the DNA substrate, which together with the progressing nucleotide cycle form the mechanistic basis for DNA recombination by continuous HJ branch migration. Branch migration allows RuvC to scan DNA until it finds its consensus sequence, where it cleaves and resolves cruciform DNA. This Photorhabdus laumondii subsp. laumondii (strain DSM 15139 / CIP 105565 / TT01) (Photorhabdus luminescens subsp. laumondii) protein is Holliday junction branch migration complex subunit RuvB.